The chain runs to 353 residues: DNA polymerase IV (353 aa).

The 182-residue stretch at 4–185 (IIHVDMDCFF…LPLSKIPGVG (182 aa)) folds into the UmuC domain. Mg(2+)-binding residues include Asp-8 and Asp-103. Residue Glu-104 is part of the active site.

The protein belongs to the DNA polymerase type-Y family. In terms of assembly, monomer. Requires Mg(2+) as cofactor.

Its subcellular location is the cytoplasm. The catalysed reaction is DNA(n) + a 2'-deoxyribonucleoside 5'-triphosphate = DNA(n+1) + diphosphate. In terms of biological role, poorly processive, error-prone DNA polymerase involved in untargeted mutagenesis. Copies undamaged DNA at stalled replication forks, which arise in vivo from mismatched or misaligned primer ends. These misaligned primers can be extended by PolIV. Exhibits no 3'-5' exonuclease (proofreading) activity. May be involved in translesional synthesis, in conjunction with the beta clamp from PolIII. This Serratia proteamaculans (strain 568) protein is DNA polymerase IV.